The primary structure comprises 583 residues: Glucosidase 2 subunit beta (583 aa).

The signal sequence occupies residues 1–26 (MVRLNLAVVALAAGALSASASASSSA). A disulfide bridge connects residues Cys-91 and Cys-115. Positions 130 to 252 (NRCEKVGKEY…LTLLLDDLAK (123 aa)) form a coiled coil. An MRH domain is found at 455–562 (NKCFSKDMGE…KVATPAVCFP (108 aa)). 3 disulfides stabilise this stretch: Cys-457–Cys-470, Cys-519–Cys-548, and Cys-533–Cys-560. The short motif at 580-583 (KDEL) is the Prevents secretion from ER element.

Heterodimer of a catalytic subunit alpha and a subunit beta.

It is found in the endoplasmic reticulum. In terms of biological role, subunit of glucosidase 2, which cleaves sequentially the 2 innermost alpha-1,3-linked glucose residues from the Glc(2)Man(9)GlcNAc(2) oligosaccharide precursor of immature glycoproteins in the endoplasmic reticulum (ER). Specifically required for the cleavage of the final glucose. The subunit beta retains the catalytic subunit alpha in the ER. The sequence is that of Glucosidase 2 subunit beta from Mycosarcoma maydis (Corn smut fungus).